The following is a 263-amino-acid chain: Protein maestro (263 aa).

The interval methionine 1–lysine 21 is disordered. One copy of the HEAT repeat lies at serine 128–alanine 163.

The protein localises to the nucleus. Its subcellular location is the nucleolus. The polypeptide is Protein maestro (MRO) (Bos taurus (Bovine)).